A 444-amino-acid polypeptide reads, in one-letter code: ATP-dependent protease ATPase subunit HslU (444 aa).

Residues isoleucine 18, glycine 60–glutamate 65, aspartate 257, glutamate 322, and arginine 394 each bind ATP.

It belongs to the ClpX chaperone family. HslU subfamily. In terms of assembly, a double ring-shaped homohexamer of HslV is capped on each side by a ring-shaped HslU homohexamer. The assembly of the HslU/HslV complex is dependent on binding of ATP.

The protein localises to the cytoplasm. Its function is as follows. ATPase subunit of a proteasome-like degradation complex; this subunit has chaperone activity. The binding of ATP and its subsequent hydrolysis by HslU are essential for unfolding of protein substrates subsequently hydrolyzed by HslV. HslU recognizes the N-terminal part of its protein substrates and unfolds these before they are guided to HslV for hydrolysis. The sequence is that of ATP-dependent protease ATPase subunit HslU from Psychromonas ingrahamii (strain DSM 17664 / CCUG 51855 / 37).